The primary structure comprises 372 residues: uncharacterized protein (372 aa).

The disordered stretch occupies residues lysine 328–glutamine 353.

Functionally, induces the SOS system when expressed in E.coli, therefore, it may play a role in DNA metabolism and/or in genome stability. This is an uncharacterized protein from Saccharomyces cerevisiae (strain ATCC 204508 / S288c) (Baker's yeast).